The following is a 535-amino-acid chain: Bifunctional purine biosynthesis protein PurH (535 aa).

One can recognise an MGS-like domain in the interval 6 to 151 (TRLPVRRALI…KNHKDVAIVV (146 aa)).

This sequence belongs to the PurH family.

The catalysed reaction is (6R)-10-formyltetrahydrofolate + 5-amino-1-(5-phospho-beta-D-ribosyl)imidazole-4-carboxamide = 5-formamido-1-(5-phospho-D-ribosyl)imidazole-4-carboxamide + (6S)-5,6,7,8-tetrahydrofolate. It catalyses the reaction IMP + H2O = 5-formamido-1-(5-phospho-D-ribosyl)imidazole-4-carboxamide. The protein operates within purine metabolism; IMP biosynthesis via de novo pathway; 5-formamido-1-(5-phospho-D-ribosyl)imidazole-4-carboxamide from 5-amino-1-(5-phospho-D-ribosyl)imidazole-4-carboxamide (10-formyl THF route): step 1/1. Its pathway is purine metabolism; IMP biosynthesis via de novo pathway; IMP from 5-formamido-1-(5-phospho-D-ribosyl)imidazole-4-carboxamide: step 1/1. In Pseudomonas putida (strain ATCC 700007 / DSM 6899 / JCM 31910 / BCRC 17059 / LMG 24140 / F1), this protein is Bifunctional purine biosynthesis protein PurH.